The primary structure comprises 433 residues: Tubulin epsilon and delta complex protein 2 (433 aa).

3 disordered regions span residues 45-69 (TGTR…ACTP), 95-169 (TKAG…VGMG), and 326-345 (QPPR…SCGG). Positions 107–120 (KSRSIVTSSGTTAS) are enriched in polar residues. S159 carries the post-translational modification Phosphoserine. Residues 327-339 (PPRPCPVGRPPGA) are compositionally biased toward pro residues.

As to quaternary structure, interacts with TEDC1. Found in a complex with TEDC1, TEDC2, TUBE1 and TUBD1.

It localises to the cell projection. The protein resides in the cilium. It is found in the cytoplasm. Its subcellular location is the cytoskeleton. The protein localises to the microtubule organizing center. It localises to the centrosome. The protein resides in the centriole. In terms of biological role, acts as a positive regulator of ciliary hedgehog signaling. Required for centriole stability. In Homo sapiens (Human), this protein is Tubulin epsilon and delta complex protein 2.